We begin with the raw amino-acid sequence, 87 residues long: Protein WFDC11 (87 aa).

The first 25 residues, 1 to 25 (MVSLMKLWIPMLMTFFCTVLLSVLG), serve as a signal peptide directing secretion.

Its subcellular location is the secreted. In Homo sapiens (Human), this protein is Protein WFDC11 (WFDC11).